Consider the following 184-residue polypeptide: Calmodulin-related protein (184 aa).

EF-hand domains follow at residues 8–43 (DQIS…LGQN), 44–79 (PTEA…KMKD), 81–116 (DSEE…LGEK), and 117–152 (LTDE…NRRR). Ca(2+) contacts are provided by aspartate 21, aspartate 23, aspartate 25, cysteine 27, glutamate 32, aspartate 57, aspartate 59, asparagine 61, threonine 63, glutamate 68, aspartate 94, aspartate 96, asparagine 98, and glutamate 105. Position 116 is an N6,N6,N6-trimethyllysine (lysine 116). Aspartate 130, aspartate 132, aspartate 134, glutamine 136, and glutamate 141 together coordinate Ca(2+). Residues 156–184 (EESKRSVNSNISRSNNGRKVRKRDRCTIL) are disordered. A compositionally biased stretch (low complexity) spans 161–170 (SVNSNISRSN). The segment covering 171-184 (NGRKVRKRDRCTIL) has biased composition (basic residues).

It belongs to the calmodulin family.

In terms of biological role, calmodulin mediates the control of a large number of enzymes, ion channels and other proteins by Ca(2+). Among the enzymes to be stimulated by the calmodulin-Ca(2+) complex are a number of protein kinases and phosphatases. The polypeptide is Calmodulin-related protein (CAM53) (Petunia hybrida (Petunia)).